The primary structure comprises 300 residues: ATP synthase gamma chain (300 aa).

This sequence belongs to the ATPase gamma chain family. As to quaternary structure, F-type ATPases have 2 components, CF(1) - the catalytic core - and CF(0) - the membrane proton channel. CF(1) has five subunits: alpha(3), beta(3), gamma(1), delta(1), epsilon(1). CF(0) has three main subunits: a, b and c.

It is found in the cell membrane. Produces ATP from ADP in the presence of a proton gradient across the membrane. The gamma chain is believed to be important in regulating ATPase activity and the flow of protons through the CF(0) complex. This is ATP synthase gamma chain from Acidothermus cellulolyticus (strain ATCC 43068 / DSM 8971 / 11B).